The sequence spans 164 residues: Transcription elongation factor GreA (164 aa).

A coiled-coil region spans residues 15–76; it reads DRLKNELDQL…LQELLNSAKV (62 aa).

The protein belongs to the GreA/GreB family.

Its function is as follows. Necessary for efficient RNA polymerase transcription elongation past template-encoded arresting sites. The arresting sites in DNA have the property of trapping a certain fraction of elongating RNA polymerases that pass through, resulting in locked ternary complexes. Cleavage of the nascent transcript by cleavage factors such as GreA or GreB allows the resumption of elongation from the new 3'terminus. GreA releases sequences of 2 to 3 nucleotides. This chain is Transcription elongation factor GreA, found in Rhodococcus erythropolis (strain PR4 / NBRC 100887).